The sequence spans 136 residues: Large ribosomal subunit protein uL16 (136 aa).

The protein belongs to the universal ribosomal protein uL16 family. Part of the 50S ribosomal subunit.

Its function is as follows. Binds 23S rRNA and is also seen to make contacts with the A and possibly P site tRNAs. The polypeptide is Large ribosomal subunit protein uL16 (Orientia tsutsugamushi (strain Boryong) (Rickettsia tsutsugamushi)).